A 328-amino-acid polypeptide reads, in one-letter code: Malate dehydrogenase (328 aa).

Residue 12–18 participates in NAD(+) binding; it reads GAAGQIG. 2 residues coordinate substrate: Arg95 and Arg101. Residues Asn108, Gln115, and 132–134 contribute to the NAD(+) site; that span reads VGN. Substrate-binding residues include Asn134 and Arg165. Catalysis depends on His190, which acts as the Proton acceptor.

Belongs to the LDH/MDH superfamily. MDH type 2 family.

It catalyses the reaction (S)-malate + NAD(+) = oxaloacetate + NADH + H(+). Its function is as follows. Catalyzes the reversible oxidation of malate to oxaloacetate. The polypeptide is Malate dehydrogenase (Variovorax paradoxus (strain S110)).